A 246-amino-acid polypeptide reads, in one-letter code: Nodulation protein G (246 aa).

An NAD(+)-binding site is contributed by 8-32; it reads VTGAMGGLGTAICQALAKDGCIVAA. Ser-140 serves as a coordination point for substrate. The active-site Proton acceptor is Tyr-153.

Belongs to the short-chain dehydrogenases/reductases (SDR) family.

Proposed to modify Nod factor fatty acyl chain. The protein is Nodulation protein G (nodG) of Azospirillum brasilense.